Here is a 102-residue protein sequence, read N- to C-terminus: Co-chaperonin GroES (102 aa).

The protein belongs to the GroES chaperonin family. As to quaternary structure, heptamer of 7 subunits arranged in a ring. Interacts with the chaperonin GroEL.

The protein localises to the cytoplasm. Together with the chaperonin GroEL, plays an essential role in assisting protein folding. The GroEL-GroES system forms a nano-cage that allows encapsulation of the non-native substrate proteins and provides a physical environment optimized to promote and accelerate protein folding. GroES binds to the apical surface of the GroEL ring, thereby capping the opening of the GroEL channel. In Chlamydia muridarum (strain MoPn / Nigg), this protein is Co-chaperonin GroES.